A 297-amino-acid chain; its full sequence is Beta-glucoside kinase (297 aa).

5 to 11 lines the ATP pocket; it reads AFDIGGT.

The protein belongs to the ROK (NagC/XylR) family. Homotetramer.

It catalyses the reaction D-cellobiose + ATP = 6-phospho-beta-D-glucosyl-(1-&gt;4)-D-glucose + ADP + H(+). With respect to regulation, is inhibited by N-ethylmaleimide in vitro, but ATP affords considerable protection against the inhibitor. Catalyzes the ATP-dependent phosphorylation of a wide variety of beta-D-glucosides, to produce 6-phospho-beta-D-glucosides including cellobiose-6'-P, gentiobiose-6'-P, cellobiitol-6-P, salicin-6-P, and arbutin-6-P. Is not able to phosphorylate alpha-D-glucosides. May have a dual role of kinase and transcriptional regulator of the cellobiose-PTS operon. In Klebsiella pneumoniae, this protein is Beta-glucoside kinase (bglK).